The following is a 289-amino-acid chain: Glycerol facilitator-aquaporin gla (289 aa).

Helical transmembrane passes span 10–30 (ITEFVGTALLIIMGNGAVANV) and 41–61 (SWMIIGWGYGLGVMLPAVAFG). Residues 68-70 (NPA) carry the NPA 1 motif. Transmembrane regions (helical) follow at residues 87-107 (AQYIIAQVLGAMFGQLLIVMV), 151-171 (FLGSFVLFFGAVAATNIFFGS), and 209-229 (MIAHLFLGFLVMGLVVALGGP). An NPA 2 motif is present at residues 235–237 (NPA). Residues 264–284 (WYAWVPVLAPILASLAAVALF) form a helical membrane-spanning segment.

This sequence belongs to the MIP/aquaporin (TC 1.A.8) family.

The protein localises to the cell membrane. Functionally, mixed channel protein that transports both water and glycerol. This is Glycerol facilitator-aquaporin gla (gla) from Lactococcus lactis subsp. cremoris (Streptococcus cremoris).